The following is a 380-amino-acid chain: Cystathionine gamma-synthase (380 aa).

Lys-195 bears the N6-(pyridoxal phosphate)lysine mark.

This sequence belongs to the trans-sulfuration enzymes family. Homotetramer. The cofactor is pyridoxal 5'-phosphate.

It is found in the cytoplasm. It catalyses the reaction O-succinyl-L-homoserine + L-cysteine = L,L-cystathionine + succinate + H(+). The protein operates within amino-acid biosynthesis; L-methionine biosynthesis via de novo pathway; L-cystathionine from O-succinyl-L-homoserine: step 1/1. Its activity is regulated as follows. Four natural products, alpha-lapachone, 9-hydroxy-alpha-lapachone, Paulownin, and Yangambin, show strong inhibitory activities against CGS. All these four inhibitors prevent the binding of OSHS to CGS in a non-competitive fashion. These compounds are specific inhibitors against CGS from H.pylori relative to E.coli since they exhibit very low inhibition activities against CGS from E.coli. Its function is as follows. Catalyzes the formation of L-cystathionine from O-succinyl-L-homoserine (OSHS) and L-cysteine, via a gamma-replacement reaction. In the absence of thiol, catalyzes gamma-elimination to form 2-oxobutanoate, succinate and ammonia. The polypeptide is Cystathionine gamma-synthase (metB) (Helicobacter pylori (Campylobacter pylori)).